Here is a 270-residue protein sequence, read N- to C-terminus: MLSLWAIGLLGLLNQVEALWSPSSYQSPAQQRSAQFSSSGWGTSPAAQNPWSFNRPMPNTNMPNMNTGSLPGSMPGAMPGSMPGAMPGSMPGAMPGSMPGSMPGSMPNAMPGAMPGGTGSGFMAGAMPGAMPNMRSSNNMMGNMRNGYPPSYMTPSPRNTICVAPVSQPRLCMVNGENTHKYRLKDVIEFLGHPNIEKVPKCVPGVPRVNCADYYAAQYIWKRGYCYCKNFHSNLPSYQMGSTQIRCVLNNCGACSQEFYVDKQRVVKCE.

The N-terminal stretch at 1-18 is a signal peptide; it reads MLSLWAIGLLGLLNQVEA. Positions 31 to 52 are enriched in polar residues; it reads QRSAQFSSSGWGTSPAAQNPWS. The disordered stretch occupies residues 31–95; sequence QRSAQFSSSG…MPGSMPGAMP (65 aa). Positions 56 to 95 are enriched in low complexity; that stretch reads PMPNTNMPNMNTGSLPGSMPGAMPGSMPGAMPGSMPGAMP.

In terms of tissue distribution, component of the acid-soluble organic matrix of calcified layers of the shell (at protein level).

The protein localises to the secreted. This chain is Methionine-rich protein, found in Lottia gigantea (Giant owl limpet).